A 307-amino-acid chain; its full sequence is Mitogen-activated protein kinase kinase 7 (307 aa).

Positions 45-303 constitute a Protein kinase domain; it reads VEKLHVLGRG…ASQLLGHPFL (259 aa). ATP is bound by residues 51 to 59 and K74; that span reads LGRGSSGIV. Residue D165 is the Proton acceptor of the active site. 2 positions are modified to phosphoserine: S193 and S199. Phosphothreonine is present on T203.

It belongs to the protein kinase superfamily. STE Ser/Thr protein kinase family. MAP kinase kinase subfamily. As to quaternary structure, interacts with MPK15. Post-translationally, phosphorylation at Ser-193 and Ser-199 by MAP kinase kinase kinases positively regulates kinase activity. As to expression, expressed in all tissues, with a relatively higher level in leaves and lower level in roots and flowers.

It catalyses the reaction L-seryl-[protein] + ATP = O-phospho-L-seryl-[protein] + ADP + H(+). It carries out the reaction L-threonyl-[protein] + ATP = O-phospho-L-threonyl-[protein] + ADP + H(+). The catalysed reaction is L-tyrosyl-[protein] + ATP = O-phospho-L-tyrosyl-[protein] + ADP + H(+). In terms of biological role, may function as a negative regulator of polar auxin transport. Positively regulates plant basal and systemic acquired resistance (SAR). Activates MPK3 and MPK6 in vitro. The protein is Mitogen-activated protein kinase kinase 7 (MKK7) of Arabidopsis thaliana (Mouse-ear cress).